The chain runs to 149 residues: Transcriptional regulator MraZ (149 aa).

SpoVT-AbrB domains are found at residues 6–52 and 81–124; these read HAHR…TPPD and SEEV…DKRE.

This sequence belongs to the MraZ family. In terms of assembly, forms oligomers.

It is found in the cytoplasm. The protein localises to the nucleoid. In Maridesulfovibrio salexigens (strain ATCC 14822 / DSM 2638 / NCIMB 8403 / VKM B-1763) (Desulfovibrio salexigens), this protein is Transcriptional regulator MraZ.